The chain runs to 99 residues: Aspartyl/glutamyl-tRNA(Asn/Gln) amidotransferase subunit C (99 aa).

It belongs to the GatC family. Heterotrimer of A, B and C subunits.

It catalyses the reaction L-glutamyl-tRNA(Gln) + L-glutamine + ATP + H2O = L-glutaminyl-tRNA(Gln) + L-glutamate + ADP + phosphate + H(+). The enzyme catalyses L-aspartyl-tRNA(Asn) + L-glutamine + ATP + H2O = L-asparaginyl-tRNA(Asn) + L-glutamate + ADP + phosphate + 2 H(+). Its function is as follows. Allows the formation of correctly charged Asn-tRNA(Asn) or Gln-tRNA(Gln) through the transamidation of misacylated Asp-tRNA(Asn) or Glu-tRNA(Gln) in organisms which lack either or both of asparaginyl-tRNA or glutaminyl-tRNA synthetases. The reaction takes place in the presence of glutamine and ATP through an activated phospho-Asp-tRNA(Asn) or phospho-Glu-tRNA(Gln). The sequence is that of Aspartyl/glutamyl-tRNA(Asn/Gln) amidotransferase subunit C from Cupriavidus taiwanensis (strain DSM 17343 / BCRC 17206 / CCUG 44338 / CIP 107171 / LMG 19424 / R1) (Ralstonia taiwanensis (strain LMG 19424)).